The sequence spans 67 residues: Pepsin B (67 aa).

The propeptide at 1 to 43 is activation peptide; the sequence is MERIILRKGKSIREAMEEQGVLEKFLKNRPKIDPAAKYHFNND.

This sequence belongs to the peptidase A1 family.

It is found in the secreted. The catalysed reaction is Degradation of gelatin, little activity on hemoglobin. Specificity on B chain of insulin more restricted than that of pepsin A. Does not cleave 1-Phe-|-Val-2, 4-Gln-|-His-5 or 23-Gly-|-Phe-24.. The protein is Pepsin B (PGB) of Sus scrofa (Pig).